The chain runs to 1190 residues: MAGHEVQYGKHRTRRSFSRIKEVLDLPNLIEIQTDSFQDFLDYGLKEVFEDVLPVSNFTDTMELEFVGYELKEPKYTLEEARAHDANYSAPIYVTFRLVNKETGEIKTQEVFFGEFPIMTEMGTFIINGAERIIVSQLVRSPGVYFNDKVDKNGKVGYGSTVIPNRGAWLELETDSKDIAYTRIDRTRKIPFTTLVRALGFSGDDEIFDIFGDSELVRNTIEKDIHKNPADSRTDEALKEIYERLRPGEPKTAESSRSLLTARFFDPRRYDLAPVGRYKINKKLNLRTRLLNQTLAEHVINGETGEIVLEAGTVLSRDVLEKVEAQFDELNLVEYIPNDNAVLLEPVLLQKFKIVAPKDPERVVTVIGNANPAENVRTVTPADILAEMSYFLNLAEGLGRVDDIDHLGNRRIRAVGELLANQVRIGLTRMERNLRERMSVQDNEVLTPQQIINIRPVTAAIKEFFGSSQLSQFMDQHNPLSELSHKRRLSALGPGGLTRDRAGYEVRDVHYTHYGRMCPIETPEGPNIGLINNLSSYGHLNKYGFIQTPYRKIDRATGTVTNEIVWLTADEEDAYIVAQSTSPLDENNRFVDKIVMGRHQGNNQEFPADSADFMDVSPKQVVAVATACIPFLENDDSNRALMGANMQRQAVPLIDPKAPYVGTGMEYQAAHDSGAAIIAQHDGKVVYADADKVEVRREDGSLDVYHISKFRRSNSGTAYNQRTLVKLGDIVEKGDFIADGPSMENGEMALGQNPIVAYMTWEGYNFEDAVIMSERLVKDDVYTSVHLEEYESETRDTKLGPEEITREIPNVGEDALRNLDEMGIIRIGAEVKEGDILVGKVTPKGEKDLSAEERLLHAIFGDKSREVRDTSLRVPHGADGVVRDVKIFTRANGDELQSGVNMLVRVYIAQKRKIKVGDKMAGRHGNKGVVSRIVPVEDMPYLPDGTPVDIMLNPLGVPSRMNIGQVMELHLGMAARNLGIHIATPVFDGASSEDLWSTVKEAGMDSDAKTILYDGRTGEPFDNRVSVGVMYMIKLHHMVDDKLHARSVGPYSLVTQQPLGGKAQFGGQRFGEMEVWALEAYGASNVLQEILTYKSDDVTGRLKAYEAITKGKPIPKPGVPESFRVLVKELQSLGLDMRVLDEDNNEVELRDLDEGEDDDIIHVDDLEKARAKAAADAAAAFAAEEAEGKE.

The protein belongs to the RNA polymerase beta chain family. As to quaternary structure, the RNAP catalytic core consists of 2 alpha, 1 beta, 1 beta' and 1 omega subunit. When a sigma factor is associated with the core the holoenzyme is formed, which can initiate transcription.

The catalysed reaction is RNA(n) + a ribonucleoside 5'-triphosphate = RNA(n+1) + diphosphate. Functionally, DNA-dependent RNA polymerase catalyzes the transcription of DNA into RNA using the four ribonucleoside triphosphates as substrates. This is DNA-directed RNA polymerase subunit beta from Streptococcus suis (strain 98HAH33).